The following is a 456-amino-acid chain: Ribosomal protein uS12 methylthiotransferase RimO (456 aa).

Residues 11 to 126 enclose the MTTase N-terminal domain; sequence PKVGFVSLGC…VMQAVHTHLP (116 aa). C20, C56, C85, C157, C161, and C164 together coordinate [4Fe-4S] cluster. Residues 143-384 enclose the Radical SAM core domain; sequence LTPKHYAYLK…MEVAEEVSAR (242 aa). The TRAM domain maps to 387–456; it reads QRKVGQTLRV…DGHDLWGEVA (70 aa).

It belongs to the methylthiotransferase family. RimO subfamily. [4Fe-4S] cluster serves as cofactor.

The protein resides in the cytoplasm. It carries out the reaction L-aspartate(89)-[ribosomal protein uS12]-hydrogen + (sulfur carrier)-SH + AH2 + 2 S-adenosyl-L-methionine = 3-methylsulfanyl-L-aspartate(89)-[ribosomal protein uS12]-hydrogen + (sulfur carrier)-H + 5'-deoxyadenosine + L-methionine + A + S-adenosyl-L-homocysteine + 2 H(+). Catalyzes the methylthiolation of an aspartic acid residue of ribosomal protein uS12. This chain is Ribosomal protein uS12 methylthiotransferase RimO, found in Cupriavidus metallidurans (strain ATCC 43123 / DSM 2839 / NBRC 102507 / CH34) (Ralstonia metallidurans).